We begin with the raw amino-acid sequence, 244 residues long: uncharacterized protein (244 aa).

The next 6 membrane-spanning stretches (helical) occupy residues Ile-22–Phe-42, Phe-63–Thr-83, Val-110–Ala-130, Ile-140–Val-160, Gly-186–Leu-206, and Ala-213–Val-233.

It localises to the cell membrane. This is an uncharacterized protein from Haemophilus influenzae (strain ATCC 51907 / DSM 11121 / KW20 / Rd).